The sequence spans 268 residues: Regulation of nuclear pre-mRNA domain-containing protein 1A (268 aa).

The CID domain maps to 1 to 133 (MSAFSEAALE…QLRQALYGDR (133 aa)).

The protein belongs to the UPF0400 (RTT103) family. In terms of assembly, may form a heterodimer with RPRD1B. Associates with the RNA polymerase II subunit POLR2A (via CTD phosphorylated at 'Ser-2' and 'Ser-7' of the heptad repeats).

The protein resides in the nucleus. In terms of biological role, interacts with phosphorylated C-terminal heptapeptide repeat domain (CTD) of the largest RNA polymerase II subunit POLR2A, and participates in dephosphorylation of the CTD by RPAP2. May act as a negative regulator of cyclin-D1 (CCND1) and cyclin-E (CCNE1) in the cell cycle. In Gallus gallus (Chicken), this protein is Regulation of nuclear pre-mRNA domain-containing protein 1A (RPRD1A).